Here is a 460-residue protein sequence, read N- to C-terminus: Light-independent protochlorophyllide reductase subunit N (460 aa).

Positions 22, 47, and 107 each coordinate [4Fe-4S] cluster.

This sequence belongs to the BchN/ChlN family. Protochlorophyllide reductase is composed of three subunits; ChlL, ChlN and ChlB. Forms a heterotetramer of two ChlB and two ChlN subunits. [4Fe-4S] cluster is required as a cofactor.

It localises to the plastid. The protein resides in the cyanelle. The enzyme catalyses chlorophyllide a + oxidized 2[4Fe-4S]-[ferredoxin] + 2 ADP + 2 phosphate = protochlorophyllide a + reduced 2[4Fe-4S]-[ferredoxin] + 2 ATP + 2 H2O. Its pathway is porphyrin-containing compound metabolism; chlorophyll biosynthesis (light-independent). Component of the dark-operative protochlorophyllide reductase (DPOR) that uses Mg-ATP and reduced ferredoxin to reduce ring D of protochlorophyllide (Pchlide) to form chlorophyllide a (Chlide). This reaction is light-independent. The NB-protein (ChlN-ChlB) is the catalytic component of the complex. The chain is Light-independent protochlorophyllide reductase subunit N from Cyanophora paradoxa.